The sequence spans 1443 residues: Sterol 3-beta-glucosyltransferase ATG26 (1443 aa).

Positions Met1 to Ala13 are enriched in low complexity. 2 disordered regions span residues Met1–Asn69 and Asn88–Thr187. A compositionally biased stretch (basic and acidic residues) spans Gly18–Gln32. Over residues Asp49–Asn58 the composition is skewed to acidic residues. The segment covering Gln104–Leu117 has biased composition (polar residues). The span at Asp125–Ser134 shows a compositional bias: basic residues. The segment covering Glu164–His173 has biased composition (acidic residues). In terms of domain architecture, GRAM 1 spans Leu240–Pro284. A PH domain is found at Glu289–Phe385. Positions Glu463–His657 are disordered. Residues Leu506–Ser525 show a composition bias toward low complexity. Positions Ser585–Gln614 are enriched in polar residues. The segment covering Ser631–Pro642 has biased composition (basic residues). Positions Arg765–Met870 constitute a GRAM 2 domain. Residues Asp883–Phe910 adopt a coiled-coil conformation. Positions 957, 958, 960, 1265, 1267, 1280, 1283, 1284, 1285, 1304, and 1305 each coordinate UDP-alpha-D-glucose. Positions Asn1385–Ala1443 are disordered. Residues Gly1405 to Ser1419 are compositionally biased toward basic and acidic residues.

This sequence belongs to the glycosyltransferase 28 family.

It is found in the cytoplasm. The protein localises to the preautophagosomal structure membrane. It carries out the reaction a sterol + UDP-alpha-D-glucose = a sterol 3-beta-D-glucoside + UDP + H(+). The catalysed reaction is ergosterol + UDP-alpha-D-glucose = ergosteryl 3-beta-D-glucoside + UDP + H(+). Its function is as follows. Sterol glycosyltransferase responsible for the glycosylation of ergosterol to form ergosterol-glucoside. The protein is Sterol 3-beta-glucosyltransferase ATG26 of Gibberella zeae (strain ATCC MYA-4620 / CBS 123657 / FGSC 9075 / NRRL 31084 / PH-1) (Wheat head blight fungus).